The chain runs to 324 residues: Quinolinate synthase (324 aa).

The iminosuccinate site is built by His-44 and Ser-62. Cys-107 is a binding site for [4Fe-4S] cluster. Residues 133 to 135 and Ser-150 each bind iminosuccinate; that span reads YVN. Position 192 (Cys-192) interacts with [4Fe-4S] cluster. Iminosuccinate is bound by residues 218–220 and Thr-235; that span reads HPE. Cys-278 is a [4Fe-4S] cluster binding site.

This sequence belongs to the quinolinate synthase family. Type 2 subfamily. It depends on [4Fe-4S] cluster as a cofactor.

It is found in the cytoplasm. The enzyme catalyses iminosuccinate + dihydroxyacetone phosphate = quinolinate + phosphate + 2 H2O + H(+). It functions in the pathway cofactor biosynthesis; NAD(+) biosynthesis; quinolinate from iminoaspartate: step 1/1. Its function is as follows. Catalyzes the condensation of iminoaspartate with dihydroxyacetone phosphate to form quinolinate. The protein is Quinolinate synthase of Leptospira interrogans serogroup Icterohaemorrhagiae serovar copenhageni (strain Fiocruz L1-130).